We begin with the raw amino-acid sequence, 357 residues long: MRVSDFTFELPDELIARYPQEQRSGCRLLSLDGPTGARQHGVFTDIVDKLNPGDLLVFNNTRVIPARLFGRKASGGKVEVLVERVLDRTRVLAHVRASKAPKPGAGLLLGDNEDIRATMLARHDALFELGFDDPRDVLTILNAAGHMPLPPYIDRPDEEADRELYQTVYSSRPGAVAAPTAGLHFDQPLLDRLRDKGVEMAFVTLHVGAGTFQPVRVESIEDHVMHSEYAEVPQEVVDAVLACKARGNRVIAVGTTSVRSLESAAAANKQALIAPFFDDTQIFIYPGYHYQVIDALITNFHLPESTLIMLVSAFAGYRHTLDAYRDAVVQQYRFFSYGDAMYITRNPQAEQEQVVSA.

It belongs to the QueA family. In terms of assembly, monomer.

It is found in the cytoplasm. The enzyme catalyses 7-aminomethyl-7-carbaguanosine(34) in tRNA + S-adenosyl-L-methionine = epoxyqueuosine(34) in tRNA + adenine + L-methionine + 2 H(+). Its pathway is tRNA modification; tRNA-queuosine biosynthesis. Functionally, transfers and isomerizes the ribose moiety from AdoMet to the 7-aminomethyl group of 7-deazaguanine (preQ1-tRNA) to give epoxyqueuosine (oQ-tRNA). The protein is S-adenosylmethionine:tRNA ribosyltransferase-isomerase of Edwardsiella ictaluri (strain 93-146).